The chain runs to 428 residues: F-box/LRR-repeat protein 3 (428 aa).

Over residues 1–21 the composition is skewed to basic and acidic residues; it reads MKRGGRDSDRNSSEEGTAEKS. Residues 1 to 27 are disordered; sequence MKRGGRDSDRNSSEEGTAEKSKKLRTT. Positions 34–81 constitute an F-box domain; it reads CDWGNLLQDIILQVFKYLPLLDRAHASQVCRNWNQVFHMPDLWRCFEF. LRR repeat units lie at residues 119–146, 181–207, 208–233, 234–259, 316–341, 343–368, and 369–394; these read SSKE…GLIS, DTPV…KMSS, CPHV…ALNY, HLLS…RIDV, GRSV…VVCA, GLRP…GLGE, and CEVS…SIME.

As to quaternary structure, part of the SCF (SKP1-CUL1-F-box) E3 ubiquitin-protein ligase complex SCF(FBXL3) composed of CUL1, SKP1, RBX1 and FBXL3. Interacts with CRY1 and CRY2 (phosphorylated). Interacts with HDAC3. Interacts with KDM8. In terms of processing, undergoes autophagy-mediated degradation in the liver in a time-dependent manner. As to expression, widely expressed.

It is found in the nucleus. It localises to the cytoplasm. Its pathway is protein modification; protein ubiquitination. Substrate-recognition component of the SCF(FBXL3) E3 ubiquitin ligase complex involved in circadian rhythm function. Plays a key role in the maintenance of both the speed and the robustness of the circadian clock oscillation. The SCF(FBXL3) complex mainly acts in the nucleus and mediates ubiquitination and subsequent degradation of CRY1 and CRY2. Activity of the SCF(FBXL3) complex is counteracted by the SCF(FBXL21) complex. The chain is F-box/LRR-repeat protein 3 (FBXL3) from Homo sapiens (Human).